Reading from the N-terminus, the 623-residue chain is Protein EDS1L (623 aa).

At Ala2 the chain carries N-acetylalanine. The Nucleophile role is filled by Ser123. Catalysis depends on charge relay system residues Asp187 and His317.

In terms of assembly, homodimer. Interacts with RPS4, RPS6, SNC1, SRFR1, AvrRps4 and HopA1. Interacts with PAD4 (via N-terminus). Interacts with SAG101. EDS1-SAG101 and EDS1-PAD4 form separate complexes in pathogen-unchallenged cells.

The protein localises to the nucleus. It localises to the cytoplasm. It is found in the microsome. Functionally, positive regulator of basal resistance and of effector-triggered immunity specifically mediated by TIR-NB-LRR resistance proteins. Disruption by bacterial effector of EDS1-TIR-NB-LRR resistance protein interactions constitutes the first step in resistance activation. Triggers early plant defenses and hypersensitive response independently of PAD4, and then recruits PAD4 to potentiate plant defenses through the accumulation of salicylic acid. Nuclear localization is essential for basal and TIR-NB-LRR-conditioned immunity and for reprogramming defense gene expression, while cytoplasmic EDS1 is required to induce a complete immune response. Heterodimerization with PAD4 or SGA101 is necessary for TNL-mediated effector-triggered immunity. Contributes to nonhost resistance against E.amylovora. Has no direct lipase activity. This Arabidopsis thaliana (Mouse-ear cress) protein is Protein EDS1L.